The chain runs to 632 residues: MAU2 chromatid cohesion factor homolog (632 aa).

2 TPR repeats span residues 453–486 (GGFY…ANAE) and 493–526 (SCSL…ASKI).

The protein belongs to the SCC4/mau-2 family. In terms of assembly, interacts with Nipped-B to form the cohesin loading complex.

Its subcellular location is the nucleus. The protein localises to the nucleoplasm. Required for association of the cohesin complex with chromatin during interphase. Plays a role in sister chromatid cohesion and normal progression through prometaphase. The protein is MAU2 chromatid cohesion factor homolog of Drosophila erecta (Fruit fly).